The chain runs to 197 residues: Thymidine kinase (197 aa).

ATP-binding positions include 9–16 (SAMDAGKT) and 87–90 (DEIH). Glu88 (proton acceptor) is an active-site residue. 4 residues coordinate Zn(2+): Cys145, Cys147, Cys187, and His190.

It belongs to the thymidine kinase family. In terms of assembly, homotetramer.

The protein resides in the cytoplasm. The catalysed reaction is thymidine + ATP = dTMP + ADP + H(+). This is Thymidine kinase from Francisella tularensis subsp. holarctica (strain LVS).